The sequence spans 190 residues: (S)-2-hydroxypropylphosphonic acid epoxidase (190 aa).

Residues 10–60 (KAHLEALLATRKMTLEHLQDVRHDATQVYFDGLEHLQNVAQYLAIPLSEFF) enclose the HTH cro/C1-type domain. The H-T-H motif DNA-binding region spans 20 to 40 (RKMTLEHLQDVRHDATQVYFD). Substrate-binding positions include arginine 87, tyrosine 95, 125 to 128 (NGGH), and glutamate 132. Positions 128, 132, and 171 each coordinate Fe cation. Residues 128-176 (HGSREIVYVTRGAVRVRWVGDNDELKEDVLNEGDSIFILPNVPHSFTNH) form the Cupin type-2 domain.

This sequence belongs to the non-heme iron-dependent dioxygenase family. In terms of assembly, homotrimer. It depends on Fe(2+) as a cofactor.

It catalyses the reaction (S)-2-hydroxypropylphosphonate + H2O2 = (1R,2S)-epoxypropylphosphonate + 2 H2O. It participates in antibiotic biosynthesis; fosfomycin biosynthesis. Functionally, non-heme-dependent dioxygenase that catalyzes the oxidative epoxidation of (S)-2-hydroxypropylphosphonate into (1R,2S)-epoxypropylphosphonate, the final step in the biosynthesis of fosfomycin antibiotic. The protein is (S)-2-hydroxypropylphosphonic acid epoxidase (hppE) of Pseudomonas syringae.